Here is a 267-residue protein sequence, read N- to C-terminus: Energy-coupling factor transporter transmembrane protein EcfT (267 aa).

5 helical membrane passes run 30–50 (FWYV…LLVA), 67–87 (WAGL…QVLF), 110–130 (ALVI…LTAT), 152–172 (VPVN…PTIM), and 247–267 (SIAL…RILL).

The protein belongs to the energy-coupling factor EcfT family. As to quaternary structure, forms a stable energy-coupling factor (ECF) transporter complex composed of 2 membrane-embedded substrate-binding proteins (S component), 2 ATP-binding proteins (A component) and 2 transmembrane proteins (T component). May be able to interact with more than 1 S component at a time.

The protein resides in the cell membrane. Its function is as follows. Transmembrane (T) component of an energy-coupling factor (ECF) ABC-transporter complex. Unlike classic ABC transporters this ECF transporter provides the energy necessary to transport a number of different substrates. This is Energy-coupling factor transporter transmembrane protein EcfT from Limosilactobacillus fermentum (strain CECT 5716 / Lc40) (Lactobacillus fermentum).